The following is a 131-amino-acid chain: Large ribosomal subunit protein bL17 (131 aa).

Belongs to the bacterial ribosomal protein bL17 family. In terms of assembly, part of the 50S ribosomal subunit. Contacts protein L32.

The sequence is that of Large ribosomal subunit protein bL17 from Bordetella petrii (strain ATCC BAA-461 / DSM 12804 / CCUG 43448).